The following is a 398-amino-acid chain: Alpha-monoglucosyldiacylglycerol synthase (398 aa).

It belongs to the glycosyltransferase group 1 family. Glycosyltransferase 4 subfamily. The cofactor is Mg(2+).

The protein resides in the cell membrane. It catalyses the reaction a 1,2-diacyl-sn-glycerol + UDP-alpha-D-glucose = a 1,2-diacyl-3-O-(alpha-D-glucopyranosyl)-sn-glycerol + UDP + H(+). Its activity is regulated as follows. Activated by the negatively charged lipids phosphatidylglycerol (PG), cardiolipin (CL), dodecylphosphate-rac-glycerol (PDG), 1,2-dioleoyl-phosphatidylglycerol (DOPG) and phosphatidylserine (PS). Glucosyltransferase involved in the biosynthesis of the non-bilayer-prone membrane lipid alpha-monoglucosyldiacylglycerol. This is a major component for maintaining a certain anionic lipid surface charge density, for balancing the bilayer to non-bilayer phase equilibria and for keeping a constant lipid bilayer spontaneous curvature (curvature packing stress). Catalyzes the transfer of a glucosyl residue from UDP-Glc to diacylglycerol (DAG) acceptor to form the corresponding alpha-glucosyl-DAG (1,2-diacyl-3-O-(alpha-D-glucopyranosyl)-sn-glycerol). It can only use UDP-Glc as sugar donor and DAG is the preferred substrate. The polypeptide is Alpha-monoglucosyldiacylglycerol synthase (mgs) (Acholeplasma laidlawii).